Reading from the N-terminus, the 262-residue chain is Hydroxyethylthiazole kinase (262 aa).

M50 is a binding site for substrate. ATP-binding residues include R125 and T171. G198 is a binding site for substrate.

The protein belongs to the Thz kinase family. The cofactor is Mg(2+).

The enzyme catalyses 5-(2-hydroxyethyl)-4-methylthiazole + ATP = 4-methyl-5-(2-phosphooxyethyl)-thiazole + ADP + H(+). It participates in cofactor biosynthesis; thiamine diphosphate biosynthesis; 4-methyl-5-(2-phosphoethyl)-thiazole from 5-(2-hydroxyethyl)-4-methylthiazole: step 1/1. Catalyzes the phosphorylation of the hydroxyl group of 4-methyl-5-beta-hydroxyethylthiazole (THZ). This Shigella boydii serotype 18 (strain CDC 3083-94 / BS512) protein is Hydroxyethylthiazole kinase.